The sequence spans 103 residues: Large ribosomal subunit protein bL21 (103 aa).

This sequence belongs to the bacterial ribosomal protein bL21 family. As to quaternary structure, part of the 50S ribosomal subunit. Contacts protein L20.

In terms of biological role, this protein binds to 23S rRNA in the presence of protein L20. In Wigglesworthia glossinidia brevipalpis, this protein is Large ribosomal subunit protein bL21.